A 357-amino-acid chain; its full sequence is DNA replication and repair protein RecF (357 aa).

Position 30–37 (30–37 (GANGSGKT)) interacts with ATP.

It belongs to the RecF family.

The protein resides in the cytoplasm. Functionally, the RecF protein is involved in DNA metabolism; it is required for DNA replication and normal SOS inducibility. RecF binds preferentially to single-stranded, linear DNA. It also seems to bind ATP. This Cronobacter sakazakii (strain ATCC BAA-894) (Enterobacter sakazakii) protein is DNA replication and repair protein RecF.